The sequence spans 394 residues: Cytochrome b561 and DOMON domain-containing protein At4g12980 (394 aa).

Residues 1 to 24 (MDSSYLRISLSFLFWALLLSPAVS) form the signal peptide. The 121-residue stretch at 49-169 (LKAILHYSYD…GKVNQVWQVG (121 aa)) folds into the DOMON domain. Residues 184–381 (GPNLNSVGSL…LEVVTWVIVL (198 aa)) enclose the Cytochrome b561 domain. The next 2 helical transmembrane spans lie at 220–240 (IHGI…AMIA) and 252–272 (AWFY…VAGW). Heme b contacts are provided by His-221, His-257, and His-290. The chain crosses the membrane as a helical span at residues 292–312 (NIGICLFSIATLQMFAMLLRP). Position 326 (His-326) interacts with heme b. The next 2 helical transmembrane spans lie at 328–348 (GVGY…LSIL) and 361–381 (VIGT…VIVL).

Requires heme b as cofactor.

The protein resides in the membrane. May act as a catecholamine-responsive trans-membrane electron transporter. This chain is Cytochrome b561 and DOMON domain-containing protein At4g12980, found in Arabidopsis thaliana (Mouse-ear cress).